Here is a 73-residue protein sequence, read N- to C-terminus: Large ribosomal subunit protein bL31 (73 aa).

This sequence belongs to the bacterial ribosomal protein bL31 family. Type A subfamily. Part of the 50S ribosomal subunit.

Its function is as follows. Binds the 23S rRNA. The chain is Large ribosomal subunit protein bL31 from Chelativorans sp. (strain BNC1).